The sequence spans 386 residues: Protein MGF 360-4L (386 aa).

It belongs to the asfivirus MGF 360 family.

Plays a role in virus cell tropism, and may be required for efficient virus replication in macrophages. The protein is Protein MGF 360-4L of Ornithodoros (relapsing fever ticks).